We begin with the raw amino-acid sequence, 373 residues long: Dual-specificity RNA methyltransferase RlmN (373 aa).

Glu94 acts as the Proton acceptor in catalysis. One can recognise a Radical SAM core domain in the interval 100-339; sequence EEDRATLCVS…VIVRKTRGDD (240 aa). A disulfide bridge connects residues Cys107 and Cys344. Positions 114, 118, and 121 each coordinate [4Fe-4S] cluster. S-adenosyl-L-methionine is bound by residues 168-169, Ser200, 222-224, and Asn301; these read GE and SIH. The active-site S-methylcysteine intermediate is Cys344.

This sequence belongs to the radical SAM superfamily. RlmN family. [4Fe-4S] cluster serves as cofactor.

The protein localises to the cytoplasm. The catalysed reaction is adenosine(2503) in 23S rRNA + 2 reduced [2Fe-2S]-[ferredoxin] + 2 S-adenosyl-L-methionine = 2-methyladenosine(2503) in 23S rRNA + 5'-deoxyadenosine + L-methionine + 2 oxidized [2Fe-2S]-[ferredoxin] + S-adenosyl-L-homocysteine. It carries out the reaction adenosine(37) in tRNA + 2 reduced [2Fe-2S]-[ferredoxin] + 2 S-adenosyl-L-methionine = 2-methyladenosine(37) in tRNA + 5'-deoxyadenosine + L-methionine + 2 oxidized [2Fe-2S]-[ferredoxin] + S-adenosyl-L-homocysteine. Its function is as follows. Specifically methylates position 2 of adenine 2503 in 23S rRNA and position 2 of adenine 37 in tRNAs. m2A2503 modification seems to play a crucial role in the proofreading step occurring at the peptidyl transferase center and thus would serve to optimize ribosomal fidelity. The polypeptide is Dual-specificity RNA methyltransferase RlmN (Shewanella sediminis (strain HAW-EB3)).